Consider the following 513-residue polypeptide: GMP synthase [glutamine-hydrolyzing] (513 aa).

The Glutamine amidotransferase type-1 domain occupies Ser3–Asp200. The active-site Nucleophile is the Cys80. Catalysis depends on residues His174 and Glu176. Positions Trp201–Arg388 constitute a GMPS ATP-PPase domain. Position 228 to 234 (Ser228 to Thr234) interacts with ATP.

As to quaternary structure, homodimer.

It carries out the reaction XMP + L-glutamine + ATP + H2O = GMP + L-glutamate + AMP + diphosphate + 2 H(+). Its pathway is purine metabolism; GMP biosynthesis; GMP from XMP (L-Gln route): step 1/1. Functionally, catalyzes the synthesis of GMP from XMP. This chain is GMP synthase [glutamine-hydrolyzing], found in Pelodictyon phaeoclathratiforme (strain DSM 5477 / BU-1).